Reading from the N-terminus, the 118-residue chain is MAGVMKLACLLLACMIVAGPITSNAALSCGSVNSNLAACIGYVLQGGVIPPACCSGVKNLNSIAKTTPDRQQACNCIQGAARALGSGLNAGRAAGIPKACGVNIPYKISTSTNCKTVR.

Positions Met1–Ala25 are cleaved as a signal peptide. 4 cysteine pairs are disulfide-bonded: Cys29-Cys76, Cys39-Cys53, Cys54-Cys100, and Cys74-Cys114.

It belongs to the plant LTP family. In terms of tissue distribution, expressed primarily in epidermal cells.

Its subcellular location is the secreted. The protein resides in the cell wall. Functionally, plant non-specific lipid-transfer proteins transfer phospholipids as well as galactolipids across membranes. May play a role in wax or cutin deposition in the cell walls of expanding epidermal cells and certain secretory tissues. The polypeptide is Non-specific lipid-transfer protein 1 (LTP1) (Arabidopsis thaliana (Mouse-ear cress)).